The primary structure comprises 207 residues: Claudin-11 (207 aa).

Met-1 is a topological domain (cytoplasmic). The helical transmembrane segment at 2-22 (VATCLQVVGFVTSFVGWIGII) threads the bilayer. The Extracellular segment spans residues 23–82 (VTTSTNDWVVTCSYTIPTCRKMDELGSKGLWADCVMATGLHHCKPLVDILILPGYAQACR). A helical transmembrane segment spans residues 83–103 (ALMIAASVLGLPGILLLLTVL). Topologically, residues 104–122 (PCIRMGHEPGVAKYRRAQL) are cytoplasmic. A helical transmembrane segment spans residues 123–143 (AGVLLILLALCAIVATIWFPV). Residues 144–157 (CAHREITIVSFGYS) are Extracellular-facing. A helical transmembrane segment spans residues 158-178 (LYAGWIGAVMCLVGGCVIVCC). At 179-207 (SGDAQSFGENRFYYSSGSSSPTHAKSAHV) the chain is on the cytoplasmic side. A phosphoserine mark is found at Ser-193, Ser-194, Ser-197, and Ser-198.

It belongs to the claudin family. In terms of assembly, interacts with tetraspanin-3/TSPAN3. Interacts with OCLN.

The protein resides in the cell junction. Its subcellular location is the tight junction. It localises to the cell membrane. Plays a major role in tight junction-specific obliteration of the intercellular space, through calcium-independent cell-adhesion activity. The chain is Claudin-11 (Cldn11) from Rattus norvegicus (Rat).